Here is a 129-residue protein sequence, read N- to C-terminus: uncharacterized protein (129 aa).

2 disordered regions span residues 1–57 (MGGG…LPNH) and 87–129 (PVSS…WLWW). Residues 10 to 20 (SGEERREKRSG) show a composition bias toward basic and acidic residues. Residues 87 to 99 (PVSSSPSRSPSSS) show a composition bias toward low complexity.

This is an uncharacterized protein from Homo sapiens (Human).